The following is a 399-amino-acid chain: Methylthioribose kinase (399 aa).

Residues Asn-40, Lys-57, and 111–113 contribute to the ATP site; that span reads EDL. Position 229 (Asp-229) interacts with substrate. 246-248 provides a ligand contact to ATP; it reads DAE. A substrate-binding site is contributed by Arg-344.

This sequence belongs to the methylthioribose kinase family. As to quaternary structure, homodimer.

It catalyses the reaction 5-(methylsulfanyl)-D-ribose + ATP = 5-(methylsulfanyl)-alpha-D-ribose 1-phosphate + ADP + H(+). It participates in amino-acid biosynthesis; L-methionine biosynthesis via salvage pathway; S-methyl-5-thio-alpha-D-ribose 1-phosphate from S-methyl-5'-thioadenosine (hydrolase route): step 2/2. In terms of biological role, catalyzes the phosphorylation of methylthioribose into methylthioribose-1-phosphate. The polypeptide is Methylthioribose kinase (Enterobacter sp. (strain 638)).